Here is a 445-residue protein sequence, read N- to C-terminus: 2-oxoisovalerate dehydrogenase subunit alpha, mitochondrial (445 aa).

Residues 1–45 constitute a mitochondrion transit peptide; it reads MAVAIAAARVWRLNRGLSQAALLLLRRPGARGLARSHPRRQQQQF. The disordered stretch occupies residues 33–54; sequence LARSHPRRQQQQFSSLDDKPQF. Thiamine diphosphate-binding residues include Tyr158 and Arg159. Ser206 contacts K(+). Position 207 (Ser207) interacts with thiamine diphosphate. K(+) is bound by residues Pro208, Thr211, and Gln212. Residue Glu238 participates in Mg(2+) binding. Gly239, Ala240, and Arg265 together coordinate thiamine diphosphate. Positions 267 and 269 each coordinate Mg(2+). His336 is a binding site for thiamine diphosphate. A Phosphoserine; by BCKDK modification is found at Ser337. At Thr338 the chain carries Phosphothreonine. 2 positions are modified to phosphoserine: Ser339 and Ser347. Lys356 is modified (N6-acetyllysine; alternate). An N6-succinyllysine; alternate modification is found at Lys356. The residue at position 380 (Lys380) is an N6-succinyllysine.

It belongs to the BCKDHA family. Heterotetramer of 2 alpha/BCKDHA and 2 beta chains/BCKDHB that forms the branched-chain alpha-keto acid decarboxylase (E1) component of the BCKD complex. The branched-chain alpha-ketoacid dehydrogenase is a large complex composed of three major building blocks E1, E2 and E3. It is organized around E2, a 24-meric cubic core composed of DBT, to which are associated 6 to 12 copies of E1, and approximately 6 copies of the dehydrogenase E3, a DLD dimer. Interacts with PPM1K. Thiamine diphosphate is required as a cofactor. Requires Mg(2+) as cofactor. Phosphorylated at Ser-337 by BCKDK and dephosphorylated by protein phosphatase PPM1K.

It is found in the mitochondrion matrix. The catalysed reaction is N(6)-[(R)-lipoyl]-L-lysyl-[protein] + 3-methyl-2-oxobutanoate + H(+) = N(6)-[(R)-S(8)-2-methylpropanoyldihydrolipoyl]-L-lysyl-[protein] + CO2. Together with BCKDHB forms the heterotetrameric E1 subunit of the mitochondrial branched-chain alpha-ketoacid dehydrogenase (BCKD) complex. The BCKD complex catalyzes the multi-step oxidative decarboxylation of alpha-ketoacids derived from the branched-chain amino-acids valine, leucine and isoleucine producing CO2 and acyl-CoA which is subsequently utilized to produce energy. The E1 subunit catalyzes the first step with the decarboxylation of the alpha-ketoacid forming an enzyme-product intermediate. A reductive acylation mediated by the lipoylamide cofactor of E2 extracts the acyl group from the E1 active site for the next step of the reaction. This chain is 2-oxoisovalerate dehydrogenase subunit alpha, mitochondrial (BCKDHA), found in Pan troglodytes (Chimpanzee).